Here is a 543-residue protein sequence, read N- to C-terminus: Carboxypeptidase Y homolog A (543 aa).

Positions 1-17 (MRVLPATLLVGAATAAV) are cleaved as a signal peptide. Residues 18–124 (PPFQQILGLP…KLEAYDLRVK (107 aa)) constitute a propeptide that is removed on maturation. 5 disulfide bridges follow: Cys-179-Cys-419, Cys-313-Cys-327, Cys-337-Cys-360, Cys-344-Cys-353, and Cys-382-Cys-389. Asn-210 carries N-linked (GlcNAc...) asparagine glycosylation. The active site involves Ser-266. Asp-458 is a catalytic residue. A glycan (N-linked (GlcNAc...) asparagine) is linked at Asn-509. His-520 is a catalytic residue.

Belongs to the peptidase S10 family.

Its subcellular location is the vacuole. It carries out the reaction Release of a C-terminal amino acid with broad specificity.. Functionally, vacuolar carboxypeptidase involved in degradation of small peptides. Digests preferentially peptides containing an aliphatic or hydrophobic residue in P1' position, as well as methionine, leucine or phenylalanine in P1 position of ester substrate. This is Carboxypeptidase Y homolog A (cpyA) from Aspergillus clavatus (strain ATCC 1007 / CBS 513.65 / DSM 816 / NCTC 3887 / NRRL 1 / QM 1276 / 107).